Reading from the N-terminus, the 61-residue chain is Photosystem II reaction center protein K (61 aa).

Positions 1 to 24 are excised as a propeptide; the sequence is MLNIFSLICICLNSALHSSSFFFA. The chain crosses the membrane as a helical span at residues 32 to 52; it reads FFNPIVDFMPVIPVLFFLLAL.

Belongs to the PsbK family. In terms of assembly, PSII is composed of 1 copy each of membrane proteins PsbA, PsbB, PsbC, PsbD, PsbE, PsbF, PsbH, PsbI, PsbJ, PsbK, PsbL, PsbM, PsbT, PsbX, PsbY, PsbZ, Psb30/Ycf12, at least 3 peripheral proteins of the oxygen-evolving complex and a large number of cofactors. It forms dimeric complexes.

The protein resides in the plastid. It localises to the chloroplast thylakoid membrane. Functionally, one of the components of the core complex of photosystem II (PSII). PSII is a light-driven water:plastoquinone oxidoreductase that uses light energy to abstract electrons from H(2)O, generating O(2) and a proton gradient subsequently used for ATP formation. It consists of a core antenna complex that captures photons, and an electron transfer chain that converts photonic excitation into a charge separation. The sequence is that of Photosystem II reaction center protein K from Drimys granadensis.